The primary structure comprises 297 residues: E3 ubiquitin-protein ligase TRIM52 (297 aa).

The segment at 20-62 (CAICLDYFKDPVSISCGHNFCRGCVTQLWSKEDEEDQNEEEDE) adopts an RING-type; degenerate zinc-finger fold. The segment at 72 to 167 (VGAMDGWDGS…DEDEDEELYP (96 aa)) is important for rapid proteolytic degradation by the proteasome. Residues 222-263 (NDQGMCFKHQEALKLFCEVDKEAICVVCRESRSHKQHSVLPL) form a B box-type zinc finger. Zn(2+) is bound by residues cysteine 227, histidine 230, cysteine 249, and histidine 255.

The protein belongs to the TRIM/RBCC family. As to quaternary structure, (Microbial infection) Interacts with Japanese encephalitis virus non-structural protein 2 (NS2A); mediates the ubiquitination of NS2A, targeting it for proteasome-mediated degradation. Autoubiquitinated. Polyubiquitinated. Undergoes extremely rapid proteolytic degradation by the proteasome.

The protein resides in the cytoplasm. The protein localises to the cytosol. It localises to the nucleus. It carries out the reaction S-ubiquitinyl-[E2 ubiquitin-conjugating enzyme]-L-cysteine + [acceptor protein]-L-lysine = [E2 ubiquitin-conjugating enzyme]-L-cysteine + N(6)-ubiquitinyl-[acceptor protein]-L-lysine.. It functions in the pathway protein modification; protein ubiquitination. In terms of biological role, E3 ubiquitin-protein ligase. Positively regulates the NF-kappa-B signaling pathway. (Microbial infection) Exhibits antiviral activity against Japanese encephalitis virus (JEV). Ubiquitinates the viral non-structural protein 2 (NS2A) and targets it for proteasome-mediated degradation. The sequence is that of E3 ubiquitin-protein ligase TRIM52 (TRIM52) from Homo sapiens (Human).